The sequence spans 585 residues: Rhizobactin siderophore biosynthesis protein RhbC (585 aa).

This sequence belongs to the IucA/IucC family.

It functions in the pathway siderophore biosynthesis; rhizobactin biosynthesis. In Rhizobium meliloti (strain 1021) (Ensifer meliloti), this protein is Rhizobactin siderophore biosynthesis protein RhbC (rhbC).